The primary structure comprises 1207 residues: AP-3 complex subunit delta-1 (1207 aa).

Ala2 carries the N-acetylalanine modification. 9 HEAT repeats span residues 34-71 (KYIS…LGYD), 142-179 (DLAR…KYPE), 180-216 (SLRP…RNPK), 218-254 (YLSL…LEPR), 257-296 (KKLI…GMPN), 298-336 (SASI…THPK), 337-373 (SVQA…KKNL), 375-409 (EIVK…QSNY), and 521-558 (VYVQ…ERLP). Disordered stretches follow at residues 630 to 695 (PLSD…RYQD) and 731 to 970 (RRHR…EEPL). Phosphoserine occurs at positions 632, 634, and 636. A compositionally biased stretch (basic and acidic residues) spans 648-675 (EEQRHTKPRAPEADEQELARRREARRQE). Residues 659–679 (EADEQELARRREARRQEQANN) are a coiled coil. Residue Ser688 is modified to Phosphoserine. A coiled-coil region spans residues 725-752 (VKLEEERRHRQRLEKDKRKKKKRERERR). The span at 731 to 740 (RRHRQRLEKD) shows a compositional bias: basic and acidic residues. A compositionally biased stretch (basic residues) spans 741–759 (KRKKKKRERERRGTRRHSS). Ser758 and Ser759 each carry phosphoserine. Position 762 is a phosphothreonine (Thr762). A phosphoserine mark is found at Ser764, Ser788, and Ser829. The segment covering 777–794 (VTEEMPENALPSDEDDKD) has biased composition (acidic residues). Residues 795–840 (PNDPYRALDIDLDKPLADSEKLPVQKHRNAETSKSPEKEDVPLVEK) show a composition bias toward basic and acidic residues. A compositionally biased stretch (basic residues) spans 841–854 (KSKKPKKKEKKHKE). Residues 846 to 870 (KKKEKKHKEKEREKKKKEVEKGEDL) adopt a coiled-coil conformation. Basic and acidic residues-rich tracts occupy residues 855–869 (KERE…KGED) and 899–908 (EGQEEPRGEE). The span at 923 to 933 (PSKHKKKKHKK) shows a compositional bias: basic residues. A compositionally biased stretch (acidic residues) spans 952-969 (ADEEAAEPVENGTLEEEP).

The protein belongs to the adaptor complexes large subunit family. In terms of assembly, AP-3 associates with the BLOC-1 complex. Adaptor protein complex 3 (AP-3) is a heterotetramer composed of two large adaptins (delta-type subunit AP3D1 and beta-type subunit AP3B1 or AP3B2), a medium adaptin (mu-type subunit AP3M1 or AP3M2) and a small adaptin (sigma-type subunit APS1 or AP3S2). Interacts with SLC30A2. Interacts with CLN3 (via dileucine motif); this interaction facilitates lysosomal targeting.

The protein localises to the cytoplasm. Its subcellular location is the golgi apparatus membrane. In terms of biological role, part of the AP-3 complex, an adaptor-related complex which is not clathrin-associated. The complex is associated with the Golgi region as well as more peripheral structures. It facilitates the budding of vesicles from the Golgi membrane and may be directly involved in trafficking to lysosomes. Involved in process of CD8+ T-cell and NK cell degranulation. In concert with the BLOC-1 complex, AP-3 is required to target cargos into vesicles assembled at cell bodies for delivery into neurites and nerve terminals. This Bos taurus (Bovine) protein is AP-3 complex subunit delta-1 (AP3D1).